The chain runs to 332 residues: UBA domain-containing protein Mud1 (332 aa).

Asp127 is a catalytic residue. Positions 246-298 are disordered; it reads GLGIEPASKASASSPNPQSGTRLGTKESVAPNNEGSSNPPSLVNPPTDPGLNS. A compositionally biased stretch (low complexity) spans 251–264; sequence PASKASASSPNPQS. Positions 275–286 are enriched in polar residues; the sequence is APNNEGSSNPPS. The UBA domain maps to 291–332; it reads PTDPGLNSKIAQLVSMGFDPLEAAQALDAANGDLDVAASFLL.

It belongs to the DDI1 family. Homodimer. Interacts (via UBA domain) with polyubiquitin (polyUb) chains (via Lys-48-linked polyUbs). Has weak binding affinity for monoubiquitin. According to another report, has no affinity for monoubiquitin.

It is found in the cytoplasm. Its subcellular location is the cell membrane. In terms of biological role, recognizes and binds polyubiquitin chains. Acts as a linker between the 19S proteasome and polyubiquitinated proteins via UBA domain interactions with ubiquitin for their subsequent degradation. Aspartic protease. Appears to act as negative regulator of constitutive exocytosis. May act at the level of secretory vesicle docking and fusion as a competitive inhibitor of SNARE assembly. Required for S-phase checkpoint control. This is UBA domain-containing protein Mud1 from Schizosaccharomyces pombe (strain 972 / ATCC 24843) (Fission yeast).